The following is an 875-amino-acid chain: F-box only protein 41 (875 aa).

3 disordered regions span residues 85–110, 165–194, and 347–542; these read ESTSFQGKEQAAGPSPAAPHLLHHHH, SSACSTPPPGPGPGPCPGPASASPASPSPA, and SSSC…PSRS. Residues 170–182 are compositionally biased toward pro residues; that stretch reads TPPPGPGPGPCPG. A compositionally biased stretch (low complexity) spans 183-194; that stretch reads PASASPASPSPA. Residues 209–351 adopt a coiled-coil conformation; it reads ALEKLEVDRR…QLQVISSSCG (143 aa). Residues 347-356 show a composition bias toward polar residues; that stretch reads SSSCGSTPSA. Residues 359–368 are compositionally biased toward gly residues; the sequence is GRGGGGGGAG. Arg360 carries the post-translational modification Omega-N-methylarginine. The segment covering 395-416 has biased composition (polar residues); that stretch reads HGSSPSTGASSRVPAASQSSGC. Ser478 is subject to Phosphoserine. A Phosphothreonine modification is found at Thr479. One can recognise an F-box domain in the interval 496 to 540; that stretch reads SEAEGPLDAPRPGPAMAGPLSSCRLSARPEGGSGRGRRAERVSPS. Residue Ser762 is modified to Phosphoserine.

Directly interacts with SKP1 and CUL1.

Its function is as follows. Substrate-recognition component of the SCF (SKP1-CUL1-F-box protein)-type E3 ubiquitin ligase complex. The polypeptide is F-box only protein 41 (FBXO41) (Homo sapiens (Human)).